The following is a 751-amino-acid chain: Photosystem I P700 chlorophyll a apoprotein A1 (751 aa).

The next 8 membrane-spanning stretches (helical) occupy residues 73–96, 159–182, 198–222, 294–312, 349–372, 388–414, 436–458, and 533–551; these read VFSA…FHGA, LYST…FHFH, LNHH…HVSL, TAHH…GHMY, WHAQ…HHQY, LSLF…IFMI, AIIS…LYIH, and FLVH…LILL. The [4Fe-4S] cluster site is built by Cys575 and Cys584. Transmembrane regions (helical) follow at residues 591–612 and 665–687; these read HVFL…HFSW and LSAY…MFLF. Residue His676 participates in chlorophyll a' binding. 2 residues coordinate chlorophyll a: Met684 and Tyr692. Trp693 lines the phylloquinone pocket. Residues 725 to 745 traverse the membrane as a helical segment; it reads AVGVAHYLLGGIATTWSFFLA.

It belongs to the PsaA/PsaB family. As to quaternary structure, the PsaA/B heterodimer binds the P700 chlorophyll special pair and subsequent electron acceptors. PSI consists of a core antenna complex that captures photons, and an electron transfer chain that converts photonic excitation into a charge separation. The eukaryotic PSI reaction center is composed of at least 11 subunits. P700 is a chlorophyll a/chlorophyll a' dimer, A0 is one or more chlorophyll a, A1 is one or both phylloquinones and FX is a shared 4Fe-4S iron-sulfur center. is required as a cofactor.

Its subcellular location is the plastid. The protein resides in the chloroplast thylakoid membrane. It catalyses the reaction reduced [plastocyanin] + hnu + oxidized [2Fe-2S]-[ferredoxin] = oxidized [plastocyanin] + reduced [2Fe-2S]-[ferredoxin]. PsaA and PsaB bind P700, the primary electron donor of photosystem I (PSI), as well as the electron acceptors A0, A1 and FX. PSI is a plastocyanin/cytochrome c6-ferredoxin oxidoreductase, converting photonic excitation into a charge separation, which transfers an electron from the donor P700 chlorophyll pair to the spectroscopically characterized acceptors A0, A1, FX, FA and FB in turn. Oxidized P700 is reduced on the lumenal side of the thylakoid membrane by plastocyanin or cytochrome c6. The sequence is that of Photosystem I P700 chlorophyll a apoprotein A1 from Tupiella akineta (Green alga).